The following is an 863-amino-acid chain: FO synthase (863 aa).

2 Radical SAM core domains span residues 91–343 (ITYS…APPN) and 551–792 (VTFV…SHIQ). Positions 92–424 (TYSRKVFIPV…PRVRGHVVAL (333 aa)) are cofG-like. [4Fe-4S] cluster-binding residues include C105, C109, C112, C565, C569, and C572. Positions 528–861 (DGPALEAVTA…RQRTTTYALR (334 aa)) are cofH-like.

In the N-terminal section; belongs to the radical SAM superfamily. CofG family. It in the C-terminal section; belongs to the radical SAM superfamily. CofH family. It depends on [4Fe-4S] cluster as a cofactor.

It catalyses the reaction 5-amino-6-(D-ribitylamino)uracil + L-tyrosine + S-adenosyl-L-methionine = 5-amino-5-(4-hydroxybenzyl)-6-(D-ribitylimino)-5,6-dihydrouracil + 2-iminoacetate + 5'-deoxyadenosine + L-methionine + H(+). The catalysed reaction is 5-amino-5-(4-hydroxybenzyl)-6-(D-ribitylimino)-5,6-dihydrouracil + S-adenosyl-L-methionine = 7,8-didemethyl-8-hydroxy-5-deazariboflavin + 5'-deoxyadenosine + L-methionine + NH4(+) + H(+). It functions in the pathway cofactor biosynthesis; coenzyme F0 biosynthesis. In terms of biological role, catalyzes the radical-mediated synthesis of 7,8-didemethyl-8-hydroxy-5-deazariboflavin (FO) from 5-amino-6-(D-ribitylamino)uracil and L-tyrosine. This Mycobacterium leprae (strain TN) protein is FO synthase (fbiC).